We begin with the raw amino-acid sequence, 501 residues long: Pyruvate kinase (501 aa).

R50 contacts substrate. The K(+) site is built by N52, S54, D85, and T86. 52–55 (NFSH) serves as a coordination point for ATP. Residues R92 and K178 each contribute to the ATP site. Mg(2+) is bound at residue E243. Residues G266, D267, and T299 each contribute to the substrate site. D267 is a Mg(2+) binding site.

The protein belongs to the pyruvate kinase family. As to quaternary structure, homotetramer. It depends on Mg(2+) as a cofactor. Requires K(+) as cofactor.

The catalysed reaction is pyruvate + ATP = phosphoenolpyruvate + ADP + H(+). The protein operates within carbohydrate degradation; glycolysis; pyruvate from D-glyceraldehyde 3-phosphate: step 5/5. The protein is Pyruvate kinase (PYK1) of Lachancea kluyveri (strain ATCC 58438 / CBS 3082 / BCRC 21498 / NBRC 1685 / JCM 7257 / NCYC 543 / NRRL Y-12651) (Yeast).